The chain runs to 502 residues: Glutamate decarboxylase (502 aa).

K278 is modified (N6-(pyridoxal phosphate)lysine). Positions 471–502 (GLHHFHMDTVETQKDIIKHWRKIAGKKTSGVC) are calmodulin-binding.

It belongs to the group II decarboxylase family. Pyridoxal 5'-phosphate serves as cofactor.

It catalyses the reaction L-glutamate + H(+) = 4-aminobutanoate + CO2. Catalyzes the production of GABA. The calmodulin-binding is calcium-dependent and it is proposed that this may, directly or indirectly, form a calcium regulated control of GABA biosynthesis. The sequence is that of Glutamate decarboxylase from Solanum lycopersicum (Tomato).